The sequence spans 361 residues: DNA replication and repair protein RecF (361 aa).

Position 30–37 (30–37 (GPNGSGKT)) interacts with ATP.

The protein belongs to the RecF family.

Its subcellular location is the cytoplasm. Functionally, the RecF protein is involved in DNA metabolism; it is required for DNA replication and normal SOS inducibility. RecF binds preferentially to single-stranded, linear DNA. It also seems to bind ATP. This Yersinia pseudotuberculosis serotype IB (strain PB1/+) protein is DNA replication and repair protein RecF.